We begin with the raw amino-acid sequence, 306 residues long: Glutaminase (306 aa).

Substrate-binding residues include serine 61, asparagine 111, glutamate 157, asparagine 164, tyrosine 188, tyrosine 240, and valine 258.

It belongs to the glutaminase family. Homotetramer.

The catalysed reaction is L-glutamine + H2O = L-glutamate + NH4(+). This chain is Glutaminase, found in Psychrobacter cryohalolentis (strain ATCC BAA-1226 / DSM 17306 / VKM B-2378 / K5).